The sequence spans 266 residues: Small ribosomal subunit protein uS2 (266 aa).

The disordered stretch occupies residues 238–266 (EFASAPDAGKKGRQAQPKKGKRASDAAAE). Over residues 248-258 (KGRQAQPKKGK) the composition is skewed to basic residues.

This sequence belongs to the universal ribosomal protein uS2 family.

In Xylella fastidiosa (strain M12), this protein is Small ribosomal subunit protein uS2.